The sequence spans 342 residues: Ferredoxin--NADP reductase (342 aa).

FAD is bound by residues Cys17, Asp36, Gln44, Tyr49, Val89, Phe124, Asp289, and Thr330.

It belongs to the ferredoxin--NADP reductase type 2 family. In terms of assembly, homodimer. It depends on FAD as a cofactor.

It catalyses the reaction 2 reduced [2Fe-2S]-[ferredoxin] + NADP(+) + H(+) = 2 oxidized [2Fe-2S]-[ferredoxin] + NADPH. The protein is Ferredoxin--NADP reductase of Rhodopseudomonas palustris (strain ATCC BAA-98 / CGA009).